A 154-amino-acid polypeptide reads, in one-letter code: MHCPFCRHPDSRVVDSRETDEGQAIRRRRSCPECGRRFTTVETAVLAVVKRSGVTEPFSREKVIRGVRRACQGRQVDDDALNKLAQQVEDAVRATGSPEVPANEVGLAILGPLRDLDEVAYLRFASVYRSFSSAEDFEREIEALRAHREVSARS.

The segment at 3-34 is a zinc-finger region; the sequence is CPFCRHPDSRVVDSRETDEGQAIRRRRSCPEC. The region spanning 46–136 is the ATP-cone domain; that stretch reads LAVVKRSGVT…VYRSFSSAED (91 aa).

It belongs to the NrdR family. The cofactor is Zn(2+).

Its function is as follows. Negatively regulates transcription of bacterial ribonucleotide reductase nrd genes and operons by binding to NrdR-boxes. The chain is Transcriptional repressor NrdR from Mycolicibacterium gilvum (strain PYR-GCK) (Mycobacterium gilvum (strain PYR-GCK)).